The following is a 449-amino-acid chain: DNA-directed RNA polymerase subunit Rpo1C (449 aa).

Residues M1 to E68 are unknown. Residues D69 to K449 are DNA-directed RNA polymerase subunit Rpo1C.

This sequence belongs to the RNA polymerase beta' chain family. In terms of assembly, part of the RNA polymerase complex.

It localises to the cytoplasm. The catalysed reaction is RNA(n) + a ribonucleoside 5'-triphosphate = RNA(n+1) + diphosphate. Its function is as follows. DNA-dependent RNA polymerase (RNAP) catalyzes the transcription of DNA into RNA using the four ribonucleoside triphosphates as substrates. Forms part of the jaw domain. In Methanothermobacter thermautotrophicus (strain Winter) (Methanobacterium thermoautotrophicum), this protein is DNA-directed RNA polymerase subunit Rpo1C.